Consider the following 482-residue polypeptide: Alpha-ketoglutarate semialdehyde dehydrogenase (482 aa).

A disordered region spans residues 1-28 (MTDPSKNYVNGEWVTSETGETTEVTNPA). The span at 11-25 (GEWVTSETGETTEVT) shows a compositional bias: low complexity. Cysteine 284 is an active-site residue.

It belongs to the aldehyde dehydrogenase family. Homotetramer.

It carries out the reaction 2,5-dioxopentanoate + NADP(+) + H2O = 2-oxoglutarate + NADPH + 2 H(+). Its pathway is carbohydrate metabolism; D-xylose degradation. Alpha-ketoglutarate semialdehyde dehydrogenase involved in the degradation of D-xylose, a major component of hemicelluloses such as xylan. Catalyzes the fifth reaction in the xylose utilization pathway through dehydratation of alpha-ketoglutarate semialdehyde (2,5-dioxopentanoate) into alpha-ketoglutarate. This Haloferax volcanii (strain ATCC 29605 / DSM 3757 / JCM 8879 / NBRC 14742 / NCIMB 2012 / VKM B-1768 / DS2) (Halobacterium volcanii) protein is Alpha-ketoglutarate semialdehyde dehydrogenase.